Here is a 268-residue protein sequence, read N- to C-terminus: Ribosomal RNA small subunit methyltransferase A (268 aa).

Residues Asn18, Leu20, Gly45, Glu66, Asp91, and Asn112 each coordinate S-adenosyl-L-methionine.

Belongs to the class I-like SAM-binding methyltransferase superfamily. rRNA adenine N(6)-methyltransferase family. RsmA subfamily.

Its subcellular location is the cytoplasm. It carries out the reaction adenosine(1518)/adenosine(1519) in 16S rRNA + 4 S-adenosyl-L-methionine = N(6)-dimethyladenosine(1518)/N(6)-dimethyladenosine(1519) in 16S rRNA + 4 S-adenosyl-L-homocysteine + 4 H(+). Its function is as follows. Specifically dimethylates two adjacent adenosines (A1518 and A1519) in the loop of a conserved hairpin near the 3'-end of 16S rRNA in the 30S particle. May play a critical role in biogenesis of 30S subunits. This Shewanella sp. (strain MR-7) protein is Ribosomal RNA small subunit methyltransferase A.